Here is a 938-residue protein sequence, read N- to C-terminus: Isoleucine--tRNA ligase (938 aa).

The short motif at 58–68 (PYANGSIHIGH) is the 'HIGH' region element. Position 183 is an N6-acetyllysine (lysine 183). Position 561 (glutamate 561) interacts with L-isoleucyl-5'-AMP. A 'KMSKS' region motif is present at residues 602–606 (KMSKS). Lysine 605 provides a ligand contact to ATP. Residues cysteine 901, cysteine 904, cysteine 921, and cysteine 924 each contribute to the Zn(2+) site.

It belongs to the class-I aminoacyl-tRNA synthetase family. IleS type 1 subfamily. In terms of assembly, monomer. Zn(2+) is required as a cofactor.

The protein resides in the cytoplasm. The catalysed reaction is tRNA(Ile) + L-isoleucine + ATP = L-isoleucyl-tRNA(Ile) + AMP + diphosphate. In terms of biological role, catalyzes the attachment of isoleucine to tRNA(Ile). As IleRS can inadvertently accommodate and process structurally similar amino acids such as valine, to avoid such errors it has two additional distinct tRNA(Ile)-dependent editing activities. One activity is designated as 'pretransfer' editing and involves the hydrolysis of activated Val-AMP. The other activity is designated 'posttransfer' editing and involves deacylation of mischarged Val-tRNA(Ile). The protein is Isoleucine--tRNA ligase of Escherichia coli O127:H6 (strain E2348/69 / EPEC).